A 129-amino-acid polypeptide reads, in one-letter code: Cytochrome c3 (129 aa).

A signal peptide spans Met-1–Ala-22. Heme c-binding residues include His-44, His-47, Cys-52, Cys-55, His-56, His-57, Cys-68, Cys-73, His-74, His-92, Cys-101, Cys-104, His-105, Cys-122, Cys-127, and His-128.

Binds 4 heme c groups per subunit.

It is found in the periplasm. Its function is as follows. Participates in sulfate respiration coupled with phosphorylation by transferring electrons from the enzyme dehydrogenase to ferredoxin. This Nitratidesulfovibrio vulgaris (strain ATCC 29579 / DSM 644 / CCUG 34227 / NCIMB 8303 / VKM B-1760 / Hildenborough) (Desulfovibrio vulgaris) protein is Cytochrome c3.